Here is a 246-residue protein sequence, read N- to C-terminus: NH(3)-dependent NAD(+) synthetase (246 aa).

ATP is bound at residue 29–36; the sequence is GLSGGIDS. Residue aspartate 35 participates in Mg(2+) binding. Arginine 110 contacts deamido-NAD(+). Threonine 130 contributes to the ATP binding site. Glutamate 135 is a Mg(2+) binding site. ATP-binding residues include lysine 159 and serine 181.

Belongs to the NAD synthetase family. In terms of assembly, homodimer.

It catalyses the reaction deamido-NAD(+) + NH4(+) + ATP = AMP + diphosphate + NAD(+) + H(+). It functions in the pathway cofactor biosynthesis; NAD(+) biosynthesis; NAD(+) from deamido-NAD(+) (ammonia route): step 1/1. In terms of biological role, catalyzes the ATP-dependent amidation of deamido-NAD to form NAD. Uses ammonia as a nitrogen source. The protein is NH(3)-dependent NAD(+) synthetase of Campylobacter jejuni subsp. jejuni serotype O:23/36 (strain 81-176).